Reading from the N-terminus, the 809-residue chain is Quinate/shikimate dehydrogenase (quinone) (809 aa).

The next 5 membrane-spanning stretches (helical) occupy residues 14–34 (VWCF…VIGG), 41–61 (GGSW…FFMF), 68–88 (VWLY…DAGF), 90–110 (FWPL…VMLT), and 127–147 (AYVI…GMFI).

It belongs to the bacterial PQQ dehydrogenase family. The cofactor is pyrroloquinoline quinone.

It is found in the cell membrane. The catalysed reaction is L-quinate + a quinone = 3-dehydroquinate + a quinol. The enzyme catalyses shikimate + a quinone = 3-dehydroshikimate + a quinol. It functions in the pathway aromatic compound metabolism; 3,4-dihydroxybenzoate biosynthesis; 3-dehydroquinate from D-quinate (PQQ route): step 1/1. In terms of biological role, can act either on quinate or on shikimate. This Acinetobacter baylyi (strain ATCC 33305 / BD413 / ADP1) protein is Quinate/shikimate dehydrogenase (quinone) (quiA).